Consider the following 393-residue polypeptide: uncharacterized protein (393 aa).

The region spanning 2–266 (AMIGLVGKPN…AEKAGIIKRK (265 aa)) is the OBG-type G domain. Residues 8–15 (GKPNVGKS) and 78–82 (DVAGL) each bind GTP. One can recognise a TGS domain in the interval 314-390 (DMIVVYPVED…KHNDIIKIVS (77 aa)).

Belongs to the TRAFAC class OBG-HflX-like GTPase superfamily. OBG GTPase family.

This is an uncharacterized protein from Methanocaldococcus jannaschii (strain ATCC 43067 / DSM 2661 / JAL-1 / JCM 10045 / NBRC 100440) (Methanococcus jannaschii).